The chain runs to 369 residues: Leucine-specific-binding protein (369 aa).

Residues 1–23 (MKRKAKTIIAGIVALAVSQGAMA) form the signal peptide. The cysteines at positions 76 and 101 are disulfide-linked.

This sequence belongs to the leucine-binding protein family.

It is found in the periplasm. In terms of biological role, this protein is a component of the leucine-specific transport system, which is one of the two periplasmic binding protein-dependent transport systems of the high-affinity transport of the branched-chain amino acids. This chain is Leucine-specific-binding protein (livK), found in Salmonella typhi.